The primary structure comprises 295 residues: Transcriptional regulator SirC (295 aa).

The HTH araC/xylS-type domain maps to 195 to 292 (EKVYNIIISD…KITPLSFMRT (98 aa)). 2 consecutive DNA-binding regions (H-T-H motif) follow at residues 212-233 (AEVA…AAEE) and 259-282 (ISQV…KRHF).

Positive regulator of the expression of the invasion-associated type III secretion system encoded within SPI-1 (pathogenicity island 1). In Salmonella typhi, this protein is Transcriptional regulator SirC (sirC).